Consider the following 445-residue polypeptide: Lateral flagellar hook-associated protein 2 (445 aa).

A coiled-coil region spans residues 388–423 (SGAFKSRKEALQANLDRLSDKQTTLERKYDMSYKRY).

This sequence belongs to the FliD family. In terms of assembly, homopentamer.

The protein resides in the secreted. It localises to the bacterial flagellum. In terms of biological role, required for the morphogenesis and for the elongation of the flagellar filament by facilitating polymerization of the flagellin monomers at the tip of growing filament. Forms a capping structure, which prevents flagellin subunits (transported through the central channel of the flagellum) from leaking out without polymerization at the distal end. Essential for swarming motility. This is Lateral flagellar hook-associated protein 2 (fliDL) from Vibrio parahaemolyticus serotype O3:K6 (strain RIMD 2210633).